Consider the following 79-residue polypeptide: Protein OPG081 (79 aa).

Residues 2 to 8 (VDAITVL) are Intravirion-facing. Residues 9 to 29 (TAIGITVLMLLMVISGAALIV) traverse the membrane as a helical segment. Residues 30–47 (KELNPNDIFTMQSLKFNR) lie on the Virion surface side of the membrane. A helical transmembrane segment spans residues 48-68 (AVTIFKYIGLFIYIPGTIILY). Residues 69–79 (ATYVKSLLMKS) lie on the Intravirion side of the membrane.

The protein belongs to the orthopoxvirus OPG081 family.

It is found in the virion membrane. Envelope protein. The polypeptide is Protein OPG081 (OPG081) (Vaccinia virus (strain Western Reserve) (VACV)).